We begin with the raw amino-acid sequence, 201 residues long: Large ribosomal subunit protein uL4 (201 aa).

Positions G42–R67 are disordered.

Belongs to the universal ribosomal protein uL4 family. In terms of assembly, part of the 50S ribosomal subunit.

Functionally, one of the primary rRNA binding proteins, this protein initially binds near the 5'-end of the 23S rRNA. It is important during the early stages of 50S assembly. It makes multiple contacts with different domains of the 23S rRNA in the assembled 50S subunit and ribosome. Its function is as follows. Forms part of the polypeptide exit tunnel. The sequence is that of Large ribosomal subunit protein uL4 from Legionella pneumophila (strain Corby).